The following is a 64-amino-acid chain: Large ribosomal subunit protein bL35 (64 aa).

Belongs to the bacterial ribosomal protein bL35 family.

The polypeptide is Large ribosomal subunit protein bL35 (Carboxydothermus hydrogenoformans (strain ATCC BAA-161 / DSM 6008 / Z-2901)).